The chain runs to 308 residues: MITTVVGSYPVVKKEETFLDKVKKVFGLYDEYKYAIERAVKDQVKAGVNIISDGQVRGDMVEIFTNNMYGFDGKRVVGRVEFIKPITLKDILYAKSIAKKLNPNVEIKGIITGPCTIASSVRVESCYSDNRDENLIYDIAKALRKEVEALKKHVPIIQIDEPILSTGMYDFDVARKAIDIIVDGLNIKFAMHVCGNVYNIIDELNKFNVDILDHEFASNKKNLVILESMEKKVGFGCVNTKVKKVESVEEIKSLIEEGIEILKNNEKLNKNLSDNILIDPDCGMRLLPIDVAFNKLKNMVEATKLIKI.

Positions 192, 194, 215, and 282 each coordinate Zn(2+).

It belongs to the archaeal MetE family. The cofactor is Zn(2+).

It participates in amino-acid biosynthesis; L-methionine biosynthesis via de novo pathway. Functionally, catalyzes the transfer of a methyl group to L-homocysteine resulting in methionine formation. Can use methylcobalamin and methylcobinamide as methyl donors, but methylcobalamin is not considered to be the physiological substrate. This is Methionine synthase from Methanocaldococcus jannaschii (strain ATCC 43067 / DSM 2661 / JAL-1 / JCM 10045 / NBRC 100440) (Methanococcus jannaschii).